The primary structure comprises 138 residues: Phospholipase A2 group V (138 aa).

Positions 1–20 (MKGLLPLAWFLACSVPAVQG) are cleaved as a signal peptide. 6 cysteine pairs are disulfide-bonded: C46/C137, C48/C64, C63/C117, C70/C110, C79/C103, and C97/C108. The Ca(2+) site is built by Y47, G49, and G51. H67 is an active-site residue. D68 contributes to the Ca(2+) binding site. D111 is a catalytic residue.

This sequence belongs to the phospholipase A2 family. The cofactor is Ca(2+). This enzyme lacks one of the seven disulfide bonds found in similar PLA2 proteins. Heart, placenta and less abundantly, in lung. Detected in the outer and inner plexiform layers of the retina (at protein level). Expressed in monocytes and macrophages.

The protein resides in the secreted. Its subcellular location is the cell membrane. The protein localises to the cytoplasmic vesicle. It localises to the phagosome. It is found in the recycling endosome. The protein resides in the golgi apparatus. Its subcellular location is the cis-Golgi network. The protein localises to the trans-Golgi network. It carries out the reaction a 1,2-diacyl-sn-glycero-3-phosphocholine + H2O = a 1-acyl-sn-glycero-3-phosphocholine + a fatty acid + H(+). It catalyses the reaction 1-hexadecanoyl-2-(9Z-octadecenoyl)-sn-glycero-3-phosphocholine + H2O = 1-hexadecanoyl-sn-glycero-3-phosphocholine + (9Z)-octadecenoate + H(+). The enzyme catalyses 1-hexadecanoyl-2-(5Z,8Z,11Z,14Z-eicosatetraenoyl)-sn-glycero-3-phosphocholine + H2O = 1-hexadecanoyl-sn-glycero-3-phosphocholine + (5Z,8Z,11Z,14Z)-eicosatetraenoate + H(+). The catalysed reaction is 1-hexadecanoyl-2-(9Z,12Z-octadecadienoyl)-sn-glycero-3-phosphoethanolamine + H2O = 1-hexadecanoyl-sn-glycero-3-phosphoethanolamine + (9Z,12Z)-octadecadienoate + H(+). It carries out the reaction 1-hexadecanoyl-2-(5Z,8Z,11Z,14Z-eicosatetraenoyl)-sn-glycero-3-phosphoethanolamine + H2O = 1-hexadecanoyl-sn-glycero-3-phosphoethanolamine + (5Z,8Z,11Z,14Z)-eicosatetraenoate + H(+). It catalyses the reaction 1-octadecanoyl-2-(5Z,8Z,11Z,14Z-eicosatetraenoyl)-sn-glycero-3-phospho-(1D-myo-inositol) + H2O = 1-octadecanoyl-sn-glycero-3-phospho-(1D-myo-inositol) + (5Z,8Z,11Z,14Z)-eicosatetraenoate + H(+). The enzyme catalyses 1-hexadecanoyl-2-(9Z-octadecenoyl)-sn-glycero-3-phosphoglycerol + H2O = 1-hexadecanoyl-sn-glycero-3-phosphoglycerol + (9Z)-octadecenoate + H(+). The catalysed reaction is N-hexadecanoyl-1,2-di-(9Z-octadecenoyl)-sn-glycero-3-phosphoethanolamine + H2O = N-hexadecanoyl-1-(9Z-octadecenoyl)-sn-glycero-3-phosphoethanolamine + (9Z)-octadecenoate + H(+). It carries out the reaction 1'-[1,2-di-(9Z-octadecenoyl)-sn-glycero-3-phospho]-3'-[1-(9Z-octadecenoyl)-sn-glycero-3-phospho]-glycerol + H2O = 1',3'-bis-[1-(9Z-octadecenoyl)-sn-glycero-3-phospho]-glycerol + (9Z)-octadecenoate + H(+). It catalyses the reaction 1',3'-bis[1,2-di-(9Z-octadecenoyl)-sn-glycero-3-phospho]-glycerol + H2O = 1'-[1,2-di-(9Z-octadecenoyl)-sn-glycero-3-phospho]-3'-[1-(9Z-octadecenoyl)-sn-glycero-3-phospho]-glycerol + (9Z)-octadecenoate + H(+). It functions in the pathway lipid metabolism; phospholipid metabolism. Its pathway is lipid metabolism; leukotriene B4 biosynthesis. It participates in lipid metabolism; leukotriene C4 biosynthesis. Activated by cardiolipin. Secretory calcium-dependent phospholipase A2 that primarily targets extracellular phospholipids. Hydrolyzes the ester bond of the fatty acyl group attached at sn-2 position of phospholipids (phospholipase A2 activity), preferentially releasing fatty acyl groups with a low degree of unsaturation such as oleoyl (C18:1) and linoleoyl (C18:2) groups. Hydrolyzes low-density lipoprotein (LDL) phospholipids releasing unsaturated fatty acids that drive macrophage polarization toward an M2 phenotype. May act in an autocrine and paracrine manner. Contributes to lipid remodeling of cellular membranes at different subcellular locations and generation of lipid mediators involved in pathogen clearance. Cleaves sn-2 fatty acyl chains of cardiolipin, a major component of the inner membrane of mitochondria and bacterial membranes. Promotes phagocytosis of bacteria in macrophages through production of lysophosphatidylethanolamines. Displays bactericidal activity against Gram-positive bacteria by directly hydrolyzing phospholipids of the bacterial membrane. Promotes phagocytosis and killing of ingested fungi likely through controlling phagosome-lysosome fusion and phagosome maturation. Plays a role in biosynthesis of cysteinyl leukotrienes (CysLTs) in myeloid cells. In eosinophils, triggers perinuclear arachidonate release and LTC4 synthesis in a PLA2G4A-independent way. In neutrophils, amplifies CysLTs biosynthesis initiated by PLA2G4A. Promotes immune complex clearance in macrophages via stimulating synthesis of CysLTs, which act through CYSLTR1 to trigger phagocytosis. May regulate antigen processing in antigen-presenting cells. In pulmonary macrophages regulates IL33 production required for activation of group 2 innate lymphoid cells. May play a role in the biosynthesis of N-acyl ethanolamines that regulate energy metabolism. Hydrolyzes N-acyl phosphatidylethanolamines to N-acyl lysophosphatidylethanolamines, which are further cleaved by a lysophospholipase D to release N-acyl ethanolamines. The chain is Phospholipase A2 group V (PLA2G5) from Homo sapiens (Human).